A 580-amino-acid polypeptide reads, in one-letter code: tRNA-guanine(15) transglycosylase (580 aa).

Aspartate 91 serves as the catalytic Nucleophile. Residues aspartate 126 and alanine 192 each contribute to the substrate site. Zn(2+) is bound by residues cysteine 275, cysteine 277, and cysteine 280. The PUA domain occupies 504 to 579; it reads RMRVVVDEDA…LAVKVRRGVE (76 aa).

Belongs to the archaeosine tRNA-ribosyltransferase family. Zn(2+) is required as a cofactor.

It carries out the reaction guanosine(15) in tRNA + 7-cyano-7-deazaguanine = 7-cyano-7-carbaguanosine(15) in tRNA + guanine. The protein operates within tRNA modification; archaeosine-tRNA biosynthesis. In terms of biological role, exchanges the guanine residue with 7-cyano-7-deazaguanine (preQ0) at position 15 in the dihydrouridine loop (D-loop) of archaeal tRNAs. This Thermococcus kodakarensis (strain ATCC BAA-918 / JCM 12380 / KOD1) (Pyrococcus kodakaraensis (strain KOD1)) protein is tRNA-guanine(15) transglycosylase.